The following is a 227-amino-acid chain: Ribosomal RNA large subunit methyltransferase E (227 aa).

The S-adenosyl-L-methionine site is built by Gly78, Trp80, Asp103, Asp119, and Asp143. Lys183 acts as the Proton acceptor in catalysis.

It belongs to the class I-like SAM-binding methyltransferase superfamily. RNA methyltransferase RlmE family.

The protein resides in the cytoplasm. It catalyses the reaction uridine(2552) in 23S rRNA + S-adenosyl-L-methionine = 2'-O-methyluridine(2552) in 23S rRNA + S-adenosyl-L-homocysteine + H(+). Functionally, specifically methylates the uridine in position 2552 of 23S rRNA at the 2'-O position of the ribose in the fully assembled 50S ribosomal subunit. The sequence is that of Ribosomal RNA large subunit methyltransferase E from Rickettsia akari (strain Hartford).